A 322-amino-acid chain; its full sequence is 4-hydroxy-3-methylbut-2-enyl diphosphate reductase (322 aa).

C15 provides a ligand contact to [4Fe-4S] cluster. Residues H44 and H77 each coordinate (2E)-4-hydroxy-3-methylbut-2-enyl diphosphate. Dimethylallyl diphosphate-binding residues include H44 and H77. Positions 44 and 77 each coordinate isopentenyl diphosphate. [4Fe-4S] cluster is bound at residue C99. A (2E)-4-hydroxy-3-methylbut-2-enyl diphosphate-binding site is contributed by H127. H127 is a dimethylallyl diphosphate binding site. An isopentenyl diphosphate-binding site is contributed by H127. Catalysis depends on E129, which acts as the Proton donor. Position 168 (T168) interacts with (2E)-4-hydroxy-3-methylbut-2-enyl diphosphate. C198 contributes to the [4Fe-4S] cluster binding site. (2E)-4-hydroxy-3-methylbut-2-enyl diphosphate-binding residues include S226, S227, N228, and S270. Dimethylallyl diphosphate contacts are provided by S226, S227, N228, and S270. Isopentenyl diphosphate contacts are provided by S226, S227, N228, and S270.

This sequence belongs to the IspH family. The cofactor is [4Fe-4S] cluster.

The enzyme catalyses isopentenyl diphosphate + 2 oxidized [2Fe-2S]-[ferredoxin] + H2O = (2E)-4-hydroxy-3-methylbut-2-enyl diphosphate + 2 reduced [2Fe-2S]-[ferredoxin] + 2 H(+). The catalysed reaction is dimethylallyl diphosphate + 2 oxidized [2Fe-2S]-[ferredoxin] + H2O = (2E)-4-hydroxy-3-methylbut-2-enyl diphosphate + 2 reduced [2Fe-2S]-[ferredoxin] + 2 H(+). It participates in isoprenoid biosynthesis; dimethylallyl diphosphate biosynthesis; dimethylallyl diphosphate from (2E)-4-hydroxy-3-methylbutenyl diphosphate: step 1/1. Its pathway is isoprenoid biosynthesis; isopentenyl diphosphate biosynthesis via DXP pathway; isopentenyl diphosphate from 1-deoxy-D-xylulose 5-phosphate: step 6/6. Functionally, catalyzes the conversion of 1-hydroxy-2-methyl-2-(E)-butenyl 4-diphosphate (HMBPP) into a mixture of isopentenyl diphosphate (IPP) and dimethylallyl diphosphate (DMAPP). Acts in the terminal step of the DOXP/MEP pathway for isoprenoid precursor biosynthesis. In Neisseria gonorrhoeae (strain ATCC 700825 / FA 1090), this protein is 4-hydroxy-3-methylbut-2-enyl diphosphate reductase.